The chain runs to 445 residues: Bifunctional protein GlmU (445 aa).

The tract at residues methionine 1–arginine 218 is pyrophosphorylase. UDP-N-acetyl-alpha-D-glucosamine is bound by residues leucine 6 to glycine 9, lysine 20, glutamine 69, glycine 74 to threonine 75, tyrosine 96 to aspartate 98, glycine 134, glutamate 147, asparagine 162, and asparagine 216. Aspartate 98 provides a ligand contact to Mg(2+). Asparagine 216 provides a ligand contact to Mg(2+). Positions lysine 219–asparagine 239 are linker. Residues glycine 240–glutamate 445 form an N-acetyltransferase region. UDP-N-acetyl-alpha-D-glucosamine contacts are provided by arginine 321 and lysine 339. The Proton acceptor role is filled by histidine 351. Positions 354 and 365 each coordinate UDP-N-acetyl-alpha-D-glucosamine. Acetyl-CoA is bound by residues alanine 368, asparagine 374 to tyrosine 375, serine 393, alanine 411, and arginine 428.

The protein in the N-terminal section; belongs to the N-acetylglucosamine-1-phosphate uridyltransferase family. In the C-terminal section; belongs to the transferase hexapeptide repeat family. In terms of assembly, homotrimer. It depends on Mg(2+) as a cofactor.

The protein localises to the cytoplasm. It catalyses the reaction alpha-D-glucosamine 1-phosphate + acetyl-CoA = N-acetyl-alpha-D-glucosamine 1-phosphate + CoA + H(+). It carries out the reaction N-acetyl-alpha-D-glucosamine 1-phosphate + UTP + H(+) = UDP-N-acetyl-alpha-D-glucosamine + diphosphate. Its pathway is nucleotide-sugar biosynthesis; UDP-N-acetyl-alpha-D-glucosamine biosynthesis; N-acetyl-alpha-D-glucosamine 1-phosphate from alpha-D-glucosamine 6-phosphate (route II): step 2/2. It functions in the pathway nucleotide-sugar biosynthesis; UDP-N-acetyl-alpha-D-glucosamine biosynthesis; UDP-N-acetyl-alpha-D-glucosamine from N-acetyl-alpha-D-glucosamine 1-phosphate: step 1/1. It participates in bacterial outer membrane biogenesis; LPS lipid A biosynthesis. Functionally, catalyzes the last two sequential reactions in the de novo biosynthetic pathway for UDP-N-acetylglucosamine (UDP-GlcNAc). The C-terminal domain catalyzes the transfer of acetyl group from acetyl coenzyme A to glucosamine-1-phosphate (GlcN-1-P) to produce N-acetylglucosamine-1-phosphate (GlcNAc-1-P), which is converted into UDP-GlcNAc by the transfer of uridine 5-monophosphate (from uridine 5-triphosphate), a reaction catalyzed by the N-terminal domain. This Thermotoga maritima (strain ATCC 43589 / DSM 3109 / JCM 10099 / NBRC 100826 / MSB8) protein is Bifunctional protein GlmU.